Here is a 583-residue protein sequence, read N- to C-terminus: Bifunctional dihydrofolate reductase-thymidylate synthase (583 aa).

The region spanning 9–229 (DIYAICACCK…TTLDFVIYSK (221 aa)) is the DHFR domain. An NADP(+)-binding site is contributed by 36–42 (GLGNEGG). Asp51 contributes to the substrate binding site. Residues 104–106 (KAS) and 125–128 (LSRT) each bind NADP(+). Substrate-binding residues include Ile165, Tyr171, and Thr186. 166–173 (GGASVYKE) contacts NADP(+). Residues 298-583 (HPEYQYLNII…HDKISMDMAA (286 aa)) are thymidylate synthase. A dUMP-binding site is contributed by Arg320. Cys465 is a catalytic residue. Residues His466, 484 to 488 (QRSCD), Asn496, and 526 to 528 (HVY) contribute to the dUMP site.

In the N-terminal section; belongs to the dihydrofolate reductase family. It in the C-terminal section; belongs to the thymidylate synthase family. Homodimer.

The catalysed reaction is (6S)-5,6,7,8-tetrahydrofolate + NADP(+) = 7,8-dihydrofolate + NADPH + H(+). It catalyses the reaction dUMP + (6R)-5,10-methylene-5,6,7,8-tetrahydrofolate = 7,8-dihydrofolate + dTMP. Its pathway is cofactor biosynthesis; tetrahydrofolate biosynthesis; 5,6,7,8-tetrahydrofolate from 7,8-dihydrofolate: step 1/1. Its function is as follows. Bifunctional enzyme. Involved in de novo dTMP biosynthesis. Key enzyme in folate metabolism. Catalyzes an essential reaction for de novo glycine and purine synthesis, DNA precursor synthesis, and for the conversion of dUMP to dTMP. This chain is Bifunctional dihydrofolate reductase-thymidylate synthase, found in Plasmodium chabaudi.